The primary structure comprises 186 residues: MKLKKAERRQAIQKAIELNPFITDSELCEQFEVSIQTIRLDRTNLSIPELRKRIKLVAEQNYEQIRALEANEVVGDLIQVEPNISAQSLIEITEESVFTKTQIARGHVLFAQANSLCVALIHKSTVLTQESNVAFIEKVKLNDTVRAEAHVVNKTSHHYVIEVNSYVRDTIVFKGTFKMFYISEDE.

One can recognise a MaoC-like domain in the interval 98–168 (FTKTQIARGH…YVIEVNSYVR (71 aa)).

Belongs to the FapR family.

Functionally, transcriptional factor involved in regulation of membrane lipid biosynthesis by repressing genes involved in fatty acid and phospholipid metabolism. This is Transcription factor FapR from Staphylococcus haemolyticus (strain JCSC1435).